The sequence spans 90 residues: U7-theraphotoxin-Hhn1k (90 aa).

The first 19 residues, 1–19 (MKTAIFTVVLALAVFAVLS), serve as a signal peptide directing secretion. Residues 20 to 50 (FGWEANEKALSEEFTELIHEKEAASETEARE) constitute a propeptide that is removed on maturation. 2 cysteine pairs are disulfide-bonded: Cys-51–Cys-65 and Cys-58–Cys-70.

It belongs to the neurotoxin 10 (Hwtx-1) family. 13 (Hntx-13) subfamily. In terms of tissue distribution, expressed by the venom gland.

Its subcellular location is the secreted. Ion channel inhibitor. In Cyriopagopus hainanus (Chinese bird spider), this protein is U7-theraphotoxin-Hhn1k.